The chain runs to 485 residues: Glutamyl-tRNA(Gln) amidotransferase subunit A (485 aa).

Catalysis depends on charge relay system residues lysine 74 and serine 149. Serine 173 (acyl-ester intermediate) is an active-site residue.

It belongs to the amidase family. GatA subfamily. In terms of assembly, heterotrimer of A, B and C subunits.

The catalysed reaction is L-glutamyl-tRNA(Gln) + L-glutamine + ATP + H2O = L-glutaminyl-tRNA(Gln) + L-glutamate + ADP + phosphate + H(+). In terms of biological role, allows the formation of correctly charged Gln-tRNA(Gln) through the transamidation of misacylated Glu-tRNA(Gln) in organisms which lack glutaminyl-tRNA synthetase. The reaction takes place in the presence of glutamine and ATP through an activated gamma-phospho-Glu-tRNA(Gln). The sequence is that of Glutamyl-tRNA(Gln) amidotransferase subunit A from Herminiimonas arsenicoxydans.